Here is a 520-residue protein sequence, read N- to C-terminus: Poly(A)-specific ribonuclease PNLDC1 (520 aa).

Residues Asp-17, Glu-19, Asp-260, and Asp-354 each coordinate Mg(2+). A helical membrane pass occupies residues 497 to 513; sequence CLLQVCGIVTAWALLAF.

It belongs to the CAF1 family. It depends on Mg(2+) as a cofactor.

Its subcellular location is the endoplasmic reticulum membrane. The enzyme catalyses Exonucleolytic cleavage of poly(A) to 5'-AMP.. In terms of biological role, 3'-exoribonuclease that has a preference for poly(A) tails of mRNAs, thereby efficiently degrading poly(A) tails. Exonucleolytic degradation of the poly(A) tail is often the first step in the decay of eukaryotic mRNAs and is also used to silence certain maternal mRNAs translationally during oocyte maturation and early embryonic development. May act as a regulator of multipotency in embryonic stem cells. Is a critical factor for proper spermatogenesis, involved in pre-piRNAs processing to generate mature piRNAs. In Pongo abelii (Sumatran orangutan), this protein is Poly(A)-specific ribonuclease PNLDC1.